The chain runs to 224 residues: UPF0319 protein VC_1853 (224 aa).

Residues 1–21 form the signal peptide; sequence MKLNPLILGLLLSFSAGHSLA.

Belongs to the UPF0319 family.

The polypeptide is UPF0319 protein VC_1853 (Vibrio cholerae serotype O1 (strain ATCC 39315 / El Tor Inaba N16961)).